The chain runs to 124 residues: Glycine cleavage system H protein (124 aa).

A Lipoyl-binding domain is found at 22 to 103 (VFVVGITDNA…AYTAWIFKIK (82 aa)). N6-lipoyllysine is present on lysine 63.

The protein belongs to the GcvH family. The glycine cleavage system is composed of four proteins: P, T, L and H. It depends on (R)-lipoate as a cofactor.

Functionally, the glycine cleavage system catalyzes the degradation of glycine. The H protein shuttles the methylamine group of glycine from the P protein to the T protein. This Bordetella pertussis (strain Tohama I / ATCC BAA-589 / NCTC 13251) protein is Glycine cleavage system H protein.